The chain runs to 101 residues: NADH-quinone oxidoreductase subunit K (101 aa).

Helical transmembrane passes span 2 to 22, 28 to 48, and 62 to 82; these read TLSA…YGAL, VIVL…FVAF, and FALF…AALI.

The protein belongs to the complex I subunit 4L family. As to quaternary structure, NDH-1 is composed of 14 different subunits. Subunits NuoA, H, J, K, L, M, N constitute the membrane sector of the complex.

The protein localises to the cell membrane. The enzyme catalyses a quinone + NADH + 5 H(+)(in) = a quinol + NAD(+) + 4 H(+)(out). Its function is as follows. NDH-1 shuttles electrons from NADH, via FMN and iron-sulfur (Fe-S) centers, to quinones in the respiratory chain. The immediate electron acceptor for the enzyme in this species is believed to be a menaquinone. Couples the redox reaction to proton translocation (for every two electrons transferred, four hydrogen ions are translocated across the cytoplasmic membrane), and thus conserves the redox energy in a proton gradient. In Geobacillus kaustophilus (strain HTA426), this protein is NADH-quinone oxidoreductase subunit K.